The primary structure comprises 1296 residues: Nuclear factor related to kappa-B-binding protein (1296 aa).

A DEUBAD domain is found at 39-156 (PEDLLEDPEI…LKQILASRSD (118 aa)). Disordered stretches follow at residues 165–186 (GPAL…EREW) and 204–232 (GDTA…PAVP). Over residues 216–232 (SSWLPSSPARSPSPAVP) the composition is skewed to low complexity. Residues Ser228 and Ser298 each carry the phosphoserine modification. Residue Lys327 forms a Glycyl lysine isopeptide (Lys-Gly) (interchain with G-Cter in SUMO2) linkage. Ser351 carries the post-translational modification Phosphoserine. Residues 370 to 495 (LGINEISSSF…FCKENEDSSD (126 aa)) form a winged-helix like domain region. Residue Lys469 forms a Glycyl lysine isopeptide (Lys-Gly) (interchain with G-Cter in SUMO2) linkage. Lys488 is covalently cross-linked (Glycyl lysine isopeptide (Lys-Gly) (interchain with G-Cter in SUMO1); alternate). Residue Lys488 forms a Glycyl lysine isopeptide (Lys-Gly) (interchain with G-Cter in SUMO2); alternate linkage. Disordered stretches follow at residues 663-758 (QAQA…SSGV) and 1015-1036 (HAAD…PAGT). Positions 700 to 713 (PSEQSQMSLSDSSM) are enriched in low complexity. Over residues 726-737 (PALPTPISPPPV) the composition is skewed to pro residues. The span at 741 to 758 (NRSGSSTVSEPAQSSSGV) shows a compositional bias: polar residues. Low complexity predominate over residues 1016–1034 (AADSPAKAPSASVPSSAPA). Ser1019 is modified (phosphoserine). Lys1234 bears the N6-acetyllysine mark. At Ser1288 the chain carries Phosphoserine.

This sequence belongs to the NFRKB family. Component of the chromatin remodeling INO80 complex; specifically part of a complex module associated with the N-terminus of INO80. Interacts with UCHL5.

It is found in the nucleus. Its function is as follows. Binds to the DNA consensus sequence 5'-GGGGAATCTCC-3'. Functionally, putative regulatory component of the chromatin remodeling INO80 complex which is involved in transcriptional regulation, DNA replication and probably DNA repair. Modulates the deubiquitinase activity of UCHL5 in the INO80 complex. The protein is Nuclear factor related to kappa-B-binding protein (Nfrkb) of Mus musculus (Mouse).